The following is a 550-amino-acid chain: Medium/long-chain-fatty-acid--CoA/3-oxocholest-4-en-26-oate--CoA ligase (550 aa).

ATP contacts are provided by residues 178–186 (TGGTTGFPK), D419, R434, and K525. A disordered region spans residues 525–550 (KPDYRWAKEQTEARPADDVHAAHVSA).

The protein belongs to the ATP-dependent AMP-binding enzyme family.

The enzyme catalyses a medium-chain fatty acid + ATP + CoA = a medium-chain fatty acyl-CoA + AMP + diphosphate. It catalyses the reaction a long-chain fatty acid + ATP + CoA = a long-chain fatty acyl-CoA + AMP + diphosphate. It carries out the reaction (25S)-3-oxocholest-4-en-26-oate + ATP + CoA = (25S)-3-oxocholest-4-en-26-oyl-CoA + AMP + diphosphate. The protein operates within lipid metabolism; fatty acid biosynthesis. It functions in the pathway steroid metabolism; cholesterol metabolism. Its function is as follows. Catalyzes the activation of medium/long-chain fatty acids as acyl-coenzyme A (acyl-CoA), which are then transferred to the multifunctional polyketide synthase (PKS) type III for further chain extension. Also involved in the degradation of cholesterol via the degradation of the side chains of C-24 branched-chain sterols. Catalyzes the ATP-dependent CoA thioesterification of the sterol 3-oxocholest-4-en-26-oate to yield 3-oxocholest-4-en-26-oyl-CoA. The chain is Medium/long-chain-fatty-acid--CoA/3-oxocholest-4-en-26-oate--CoA ligase from Mycobacterium marinum (strain ATCC BAA-535 / M).